The primary structure comprises 548 residues: Probable malate:quinone oxidoreductase (548 aa).

A disordered region spans residues 522–548; the sequence is KPQAADSTPKPQLKPKPVQKEVADIAL. Residues 539 to 548 are compositionally biased toward basic and acidic residues; the sequence is VQKEVADIAL.

The protein belongs to the MQO family. FAD serves as cofactor.

It catalyses the reaction (S)-malate + a quinone = a quinol + oxaloacetate. It participates in carbohydrate metabolism; tricarboxylic acid cycle; oxaloacetate from (S)-malate (quinone route): step 1/1. The chain is Probable malate:quinone oxidoreductase from Escherichia coli O9:H4 (strain HS).